We begin with the raw amino-acid sequence, 196 residues long: Holliday junction branch migration complex subunit RuvA (196 aa).

The tract at residues 1–63 is domain I; the sequence is MINKICGKIV…EDEIRLFGFL (63 aa). The interval 64 to 135 is domain II; that stretch reads NVSEREVFEK…KLRGKLVKVN (72 aa). Residues 135–138 are flexible linker; sequence NEAS. Residues 139-196 form a domain III region; it reads SGVLKFKELEQSIVNMGFDRKLVAAAIKEIMLIDEFLMLRQVDQEQFLFREILRKLSG.

This sequence belongs to the RuvA family. In terms of assembly, homotetramer. Forms an RuvA(8)-RuvB(12)-Holliday junction (HJ) complex. HJ DNA is sandwiched between 2 RuvA tetramers; dsDNA enters through RuvA and exits via RuvB. An RuvB hexamer assembles on each DNA strand where it exits the tetramer. Each RuvB hexamer is contacted by two RuvA subunits (via domain III) on 2 adjacent RuvB subunits; this complex drives branch migration. In the full resolvosome a probable DNA-RuvA(4)-RuvB(12)-RuvC(2) complex forms which resolves the HJ.

The protein localises to the cytoplasm. Functionally, the RuvA-RuvB-RuvC complex processes Holliday junction (HJ) DNA during genetic recombination and DNA repair, while the RuvA-RuvB complex plays an important role in the rescue of blocked DNA replication forks via replication fork reversal (RFR). RuvA specifically binds to HJ cruciform DNA, conferring on it an open structure. The RuvB hexamer acts as an ATP-dependent pump, pulling dsDNA into and through the RuvAB complex. HJ branch migration allows RuvC to scan DNA until it finds its consensus sequence, where it cleaves and resolves the cruciform DNA. The chain is Holliday junction branch migration complex subunit RuvA from Borrelia turicatae (strain 91E135).